A 38-amino-acid polypeptide reads, in one-letter code: Large ribosomal subunit protein bL36 (38 aa).

It belongs to the bacterial ribosomal protein bL36 family.

The chain is Large ribosomal subunit protein bL36 from Buchnera aphidicola subsp. Schizaphis graminum (strain Sg).